We begin with the raw amino-acid sequence, 295 residues long: Ethanolamine ammonia-lyase small subunit (295 aa).

Residues V207, E228, and C258 each contribute to the adenosylcob(III)alamin site.

Belongs to the EutC family. As to quaternary structure, the basic unit is a heterodimer which dimerizes to form tetramers. The heterotetramers trimerize; 6 large subunits form a core ring with 6 small subunits projecting outwards. Adenosylcob(III)alamin is required as a cofactor.

It is found in the bacterial microcompartment. It catalyses the reaction ethanolamine = acetaldehyde + NH4(+). The protein operates within amine and polyamine degradation; ethanolamine degradation. Functionally, catalyzes the deamination of various vicinal amino-alcohols to oxo compounds. Allows this organism to utilize ethanolamine as the sole source of nitrogen and carbon in the presence of external vitamin B12. The polypeptide is Ethanolamine ammonia-lyase small subunit (Escherichia coli O81 (strain ED1a)).